Reading from the N-terminus, the 155-residue chain is MRSVGLSILVKKLKKIITAPVEGLGYELVGIEFIQSRQSVLRIYIDHEEGVTVDSCADVSKEVSLVLDVEDPITVPYNLEISSPGLDRPLFTARHYAQFIGEKVNLMLRMAIQNQRKWQGIIKSVDGESIIVAVNQKDEVFALSNIQKANLVPHF.

The protein belongs to the RimP family.

It localises to the cytoplasm. Functionally, required for maturation of 30S ribosomal subunits. The chain is Ribosome maturation factor RimP from Hamiltonella defensa subsp. Acyrthosiphon pisum (strain 5AT).